Here is a 317-residue protein sequence, read N- to C-terminus: Transcriptional regulator LsrR (317 aa).

Residues 33-56 (QSEISDRLGLTRLKVSRLLEKGHQ) constitute a DNA-binding region (H-T-H motif).

This sequence belongs to the SorC transcriptional regulatory family.

It is found in the cytoplasm. Its activity is regulated as follows. Inactivated by phosphorylated autoinducer-2 (phospho-AI-2). Phospho-AI-2 acts by binding to LsrR, which is then unable to bind to the promoter regions, allowing the transcription of the target genes. Functionally, transcriptional regulator that represses the expression of the lsr operon in the absence of the quorum-sensing signaling molecule autoinducer 2 (AI-2). It also represses the expression of the lsrRK operon. Acts by binding directly to the lsrA and lsrR promoter regions. In the presence of phosphorylated autoinducer-2 (phospho-AI-2), LsrR is inactivated, leading to the transcription of the genes. The sequence is that of Transcriptional regulator LsrR (lsrR) from Escherichia coli O157:H7.